The sequence spans 210 residues: Putative RING-H2 finger protein ATL50 (210 aa).

The chain crosses the membrane as a helical span at residues 35–55; sequence IVLLYITLLSIIFFVAALIHL. The RING-type; atypical zinc finger occupies 122 to 164; sequence CAVCLREFTAEDELRLLPKCSHAFHVECIDTWLLTNSTCPLCR. The disordered stretch occupies residues 187–210; the sequence is SDGDNSQDSDSSFMLTDLDDVESK.

The protein belongs to the RING-type zinc finger family. ATL subfamily.

It is found in the membrane. The catalysed reaction is S-ubiquitinyl-[E2 ubiquitin-conjugating enzyme]-L-cysteine + [acceptor protein]-L-lysine = [E2 ubiquitin-conjugating enzyme]-L-cysteine + N(6)-ubiquitinyl-[acceptor protein]-L-lysine.. The protein operates within protein modification; protein ubiquitination. The sequence is that of Putative RING-H2 finger protein ATL50 (ATL50) from Arabidopsis thaliana (Mouse-ear cress).